Here is a 485-residue protein sequence, read N- to C-terminus: Regulatory protein ViaA (485 aa).

This sequence belongs to the ViaA family. In terms of assembly, homodimer. Interacts with RavA.

Its subcellular location is the cytoplasm. Its function is as follows. Component of the RavA-ViaA chaperone complex, which may act on the membrane to optimize the function of some of the respiratory chains. ViaA stimulates the ATPase activity of RavA. In Photorhabdus laumondii subsp. laumondii (strain DSM 15139 / CIP 105565 / TT01) (Photorhabdus luminescens subsp. laumondii), this protein is Regulatory protein ViaA.